The following is a 431-amino-acid chain: Glutamate--tRNA ligase 1 (431 aa).

The 'HIGH' region signature appears at 6–16; the sequence is PSPTGDMHIGN. Residues 235 to 239 carry the 'KMSKS' region motif; the sequence is KMSKR. Lys-238 lines the ATP pocket.

It belongs to the class-I aminoacyl-tRNA synthetase family. Glutamate--tRNA ligase type 1 subfamily. Monomer.

The protein resides in the cytoplasm. The catalysed reaction is tRNA(Glu) + L-glutamate + ATP = L-glutamyl-tRNA(Glu) + AMP + diphosphate. Its function is as follows. Catalyzes the attachment of glutamate to tRNA(Glu) in a two-step reaction: glutamate is first activated by ATP to form Glu-AMP and then transferred to the acceptor end of tRNA(Glu). The protein is Glutamate--tRNA ligase 1 of Nitratiruptor sp. (strain SB155-2).